The chain runs to 97 residues: C-C motif chemokine 8 (97 aa).

The first 23 residues, 1–23 (MKIYAVLLCLLLIAVPVSPEKLT), serve as a signal peptide directing secretion. Cystine bridges form between C32–C57 and C33–C73.

This sequence belongs to the intercrine beta (chemokine CC) family. Monomer or homodimer; in equilibrium.

It is found in the secreted. Chemotactic factor that attracts monocytes. This protein can bind heparin. In Mus musculus (Mouse), this protein is C-C motif chemokine 8 (Ccl8).